We begin with the raw amino-acid sequence, 132 residues long: Small ribosomal subunit protein uS12 (132 aa).

Residue Asp-89 is modified to 3-methylthioaspartic acid. Positions 106–132 (GVKDRKKSRSKYGTKKPKEAAKTAAKK) are disordered. Over residues 109–120 (DRKKSRSKYGTK) the composition is skewed to basic residues.

The protein belongs to the universal ribosomal protein uS12 family. In terms of assembly, part of the 30S ribosomal subunit. Contacts proteins S8 and S17. May interact with IF1 in the 30S initiation complex.

In terms of biological role, with S4 and S5 plays an important role in translational accuracy. Interacts with and stabilizes bases of the 16S rRNA that are involved in tRNA selection in the A site and with the mRNA backbone. Located at the interface of the 30S and 50S subunits, it traverses the body of the 30S subunit contacting proteins on the other side and probably holding the rRNA structure together. The combined cluster of proteins S8, S12 and S17 appears to hold together the shoulder and platform of the 30S subunit. In Thermus thermophilus (strain ATCC BAA-163 / DSM 7039 / HB27), this protein is Small ribosomal subunit protein uS12 (rpsL).